Here is a 297-residue protein sequence, read N- to C-terminus: L-ribulose 3-epimerase (297 aa).

The active-site Proton donor/acceptor is Glu-147. Mn(2+) is bound at residue Glu-147. Substrate contacts are provided by residues Glu-153 and 180–183; that span reads DTFH. Mn(2+) contacts are provided by Asp-180 and His-206. Arg-212 contacts substrate. Glu-241 serves as the catalytic Proton donor/acceptor. Residue Glu-241 participates in Mn(2+) binding.

The protein belongs to the hyi family. Homotetramer. Mn(2+) is required as a cofactor.

The catalysed reaction is L-ribulose = L-xylulose. It catalyses the reaction keto-D-tagatose = keto-D-sorbose. The enzyme catalyses D-allulose = keto-D-fructose. Its activity is regulated as follows. Strongly inhibited by Co(2+) and Ni(2+), and slightly inhibited by EDTA. In terms of biological role, catalyzes the epimerization of various ketoses at the C(3) position. It is able to interconvert L-ribulose with high efficiency. The enzyme can also accept other ketopentoses such as D-psicose and D-tagatose with lower efficiency. In Mesorhizobium japonicum (strain LMG 29417 / CECT 9101 / MAFF 303099) (Mesorhizobium loti (strain MAFF 303099)), this protein is L-ribulose 3-epimerase.